Here is a 752-residue protein sequence, read N- to C-terminus: Polyribonucleotide nucleotidyltransferase (752 aa).

Mg(2+) is bound by residues aspartate 529 and aspartate 535. Positions 595 to 654 constitute a KH domain; the sequence is PRVTTIKVPVDKIGEVIGPKGKVINAITEETGAQISIEDDGTVFVGATDGPSAQAAIDKI. The region spanning 666–735 is the S1 motif domain; it reads GERFLGTVVK…KRGKISLILV (70 aa).

Belongs to the polyribonucleotide nucleotidyltransferase family. It depends on Mg(2+) as a cofactor.

It localises to the cytoplasm. The catalysed reaction is RNA(n+1) + phosphate = RNA(n) + a ribonucleoside 5'-diphosphate. In terms of biological role, involved in mRNA degradation. Catalyzes the phosphorolysis of single-stranded polyribonucleotides processively in the 3'- to 5'-direction. The protein is Polyribonucleotide nucleotidyltransferase of Mycobacterium tuberculosis (strain ATCC 25177 / H37Ra).